A 243-amino-acid chain; its full sequence is MRIDIFTLFPEMFTGVLSSSILGKASEKELVDFHVTNFRDFSESKHGTVDDTPYGGGGGMVLKPEPLFRAVEGLTGEKKPRVILMCPQGVPYHQKLAEELAQEEHLVFICGHYEGYDERIREHLVTDEISIGDYVLTGGELAAMVVIDSVVRLQPGALGNQTSAVEDSFSTGLLEYPHYTRPAEFRGWKVPDVLLSGHHANIESWRLKESLRRTKARRPDLLEKLALTDEMKKLLAELEQEKK.

Residues Gly111 and 131 to 136 (IGDYVL) contribute to the S-adenosyl-L-methionine site.

It belongs to the RNA methyltransferase TrmD family. Homodimer.

The protein resides in the cytoplasm. It carries out the reaction guanosine(37) in tRNA + S-adenosyl-L-methionine = N(1)-methylguanosine(37) in tRNA + S-adenosyl-L-homocysteine + H(+). Its function is as follows. Specifically methylates guanosine-37 in various tRNAs. This Brevibacillus brevis (strain 47 / JCM 6285 / NBRC 100599) protein is tRNA (guanine-N(1)-)-methyltransferase.